Reading from the N-terminus, the 483-residue chain is Probable 4-aminobutyrate aminotransferase, mitochondrial (483 aa).

Position 148 to 149 (148 to 149 (GT)) interacts with pyridoxal 5'-phosphate. A substrate-binding site is contributed by Arg204. Lys341 carries the N6-(pyridoxal phosphate)lysine modification. Residue Thr365 participates in pyridoxal 5'-phosphate binding.

Belongs to the class-III pyridoxal-phosphate-dependent aminotransferase family. As to quaternary structure, homodimer. Pyridoxal 5'-phosphate is required as a cofactor.

It is found in the mitochondrion matrix. It carries out the reaction 4-aminobutanoate + 2-oxoglutarate = succinate semialdehyde + L-glutamate. The catalysed reaction is (S)-3-amino-2-methylpropanoate + 2-oxoglutarate = 2-methyl-3-oxopropanoate + L-glutamate. The protein is Probable 4-aminobutyrate aminotransferase, mitochondrial (gta-1) of Caenorhabditis elegans.